The sequence spans 341 residues: NADH-ubiquinone oxidoreductase chain 1 (341 aa).

10 helical membrane-spanning segments follow: residues 2–22 (IINI…VAYL), 39–59 (PNFV…KLLL), 71–91 (IILV…WVVI), 104–124 (LGIL…LLSG), 141–161 (AQLI…IMFV), 175–195 (VVWY…ASVA), 212–230 (VAGY…FFLA), 243–263 (GYLL…NILF), 276–296 (LINS…FIWV), and 308–328 (LINF…LIIP).

The protein belongs to the complex I subunit 1 family. In terms of assembly, complex I is composed of 37 different subunits.

Its subcellular location is the mitochondrion inner membrane. It carries out the reaction a ubiquinone + NADH + 5 H(+)(in) = a ubiquinol + NAD(+) + 4 H(+)(out). In terms of biological role, core subunit of the mitochondrial membrane respiratory chain NADH dehydrogenase (Complex I) that is believed to belong to the minimal assembly required for catalysis. Complex I functions in the transfer of electrons from NADH to the respiratory chain. The immediate electron acceptor for the enzyme is believed to be ubiquinone. The protein is NADH-ubiquinone oxidoreductase chain 1 (ND1) of Yarrowia lipolytica (strain CLIB 122 / E 150) (Yeast).